We begin with the raw amino-acid sequence, 204 residues long: MSAPQPHDLLWGMTPAALPVDAPAWATQVLAAGQPVVVRRACCAAGWVAVGLRGEGRAQRLGVQMRLADIRRQLRPEALRGQGTSPWAALQALASVAPVLDACGLAWGPTGGVGYQLATGVEVLHAASDLDLLLRTPRPMSRAKARELLDSLDCSPCRIDVQLQTPAGGIALREWAGVAQRVLLKSALGARLVADPWNLLECAA.

Catalysis depends on residues Asp-129 and Asp-131.

Belongs to the MdcG family.

The catalysed reaction is apo-[malonate decarboxylase ACP] + 2'-(5''-triphospho-alpha-D-ribosyl)-3'-dephospho-CoA = holo-[malonate decarboxylase ACP] + diphosphate. Functionally, transfers 2'-(5-triphosphoribosyl)-3'-dephosphocoenzyme-A to the apo-[acyl-carrier-protein] of the malonate decarboxylase to yield holo-[acyl-carrier-protein]. The chain is Phosphoribosyl-dephospho-CoA transferase from Pseudomonas putida (strain W619).